The following is a 105-amino-acid chain: Nitrogen fixation nifHD1 region GlnB-like protein 1 (105 aa).

It belongs to the P(II) protein family.

Could be involved in the regulation of nitrogen fixation. The chain is Nitrogen fixation nifHD1 region GlnB-like protein 1 (glnBA) from Methanosarcina barkeri.